Consider the following 331-residue polypeptide: Phosphoribosylformylglycinamidine cyclo-ligase (331 aa).

This sequence belongs to the AIR synthase family.

Its subcellular location is the cytoplasm. It catalyses the reaction 2-formamido-N(1)-(5-O-phospho-beta-D-ribosyl)acetamidine + ATP = 5-amino-1-(5-phospho-beta-D-ribosyl)imidazole + ADP + phosphate + H(+). The protein operates within purine metabolism; IMP biosynthesis via de novo pathway; 5-amino-1-(5-phospho-D-ribosyl)imidazole from N(2)-formyl-N(1)-(5-phospho-D-ribosyl)glycinamide: step 2/2. The protein is Phosphoribosylformylglycinamidine cyclo-ligase of Clostridium novyi (strain NT).